The following is a 197-amino-acid chain: TLE family member 5 (197 aa).

Residues 166–197 (LSALGSQAHLSKEDKNGHDGDTHQEDDGEKSD) form a CCN domain region. The segment at 174 to 197 (HLSKEDKNGHDGDTHQEDDGEKSD) is disordered. Over residues 175 to 197 (LSKEDKNGHDGDTHQEDDGEKSD) the composition is skewed to basic and acidic residues. Ser196 carries the phosphoserine modification.

The protein belongs to the WD repeat Groucho/TLE family. In terms of assembly, homooligomer and heterooligomer with other family members. Binds TCF7. Binds the NF-kappa-B subunit RELA. Interacts with PHF12. Interacts (via Q domain) with SIX3. Interacts with SIX6. Ubiquitinated by XIAP/BIRC4. In terms of tissue distribution, found predominantly in muscle, heart and Placenta. In fetal tissues, abundantly expressed in the heart, lung, kidney, brain and liver.

It is found in the nucleus. In terms of biological role, transcriptional corepressor. Acts as a dominant repressor towards other family members. Inhibits NF-kappa-B-regulated gene expression. May be required for the initiation and maintenance of the differentiated state. Essential for the transcriptional repressor activity of SIX3 during retina and lens development. In Homo sapiens (Human), this protein is TLE family member 5.